Reading from the N-terminus, the 361-residue chain is S-adenosylmethionine:tRNA ribosyltransferase-isomerase (361 aa).

Belongs to the QueA family. Monomer.

It localises to the cytoplasm. The catalysed reaction is 7-aminomethyl-7-carbaguanosine(34) in tRNA + S-adenosyl-L-methionine = epoxyqueuosine(34) in tRNA + adenine + L-methionine + 2 H(+). It functions in the pathway tRNA modification; tRNA-queuosine biosynthesis. Its function is as follows. Transfers and isomerizes the ribose moiety from AdoMet to the 7-aminomethyl group of 7-deazaguanine (preQ1-tRNA) to give epoxyqueuosine (oQ-tRNA). This Rhizobium etli (strain ATCC 51251 / DSM 11541 / JCM 21823 / NBRC 15573 / CFN 42) protein is S-adenosylmethionine:tRNA ribosyltransferase-isomerase.